A 233-amino-acid polypeptide reads, in one-letter code: Lysine exporter LysE (233 aa).

Topologically, residues 1–2 (ME) are cytoplasmic. Residues 3–23 (IFITGLLLGASLLLSIGPQNV) traverse the membrane as a helical segment. The Periplasmic portion of the chain corresponds to 24–65 (LVIKQGIKREGLIAVLLVCLISDVFLFIAGTLGVDLLSNAAP). The helical transmembrane segment at 66–86 (IVLDIMRWGGIAYLLWFAVMA) threads the bilayer. Residues 87 to 143 (AKDAMTNKVEAPQIIEETEPTVPDDTPLGGSAVATDTRNRVRVEVSVDKQRVWVKPM) are Cytoplasmic-facing. Residues 144-164 (LMAIVLTWLNPNAYLDAFVFI) form a helical membrane-spanning segment. Residues 165 to 176 (GGVGAQYGDTGR) are Periplasmic-facing. Residues 177–197 (WIFAAGAFAASLIWFPLVGFG) form a helical membrane-spanning segment. Residues 198 to 212 (AAALSRPLSSPKVWR) are Cytoplasmic-facing. Residues 213-233 (WINVVVAVVMTALAIKLMLMG) traverse the membrane as a helical segment.

The protein belongs to the LysE/ArgO transporter (TC 2.A.75) family.

It localises to the cell inner membrane. Transport process is modulated by three forces: the membrane potential, the chemical potential of lysine, and the proton gradient. Strongly inhibited by CCCP and valinomycin. Its function is as follows. Catalyzes the efflux of L-lysine. Can also export L-arginine and L-citrulline. The lysEG system prevents bacteriostasis due to elevated L-lysine or L-arginine concentrations that arise during growth in the presence of peptides or in mutants possessing a deregulated biosynthesis pathway. In vitro, can also export D-lysine during biotechnological production of D-amino acids. In Corynebacterium glutamicum (strain ATCC 13032 / DSM 20300 / JCM 1318 / BCRC 11384 / CCUG 27702 / LMG 3730 / NBRC 12168 / NCIMB 10025 / NRRL B-2784 / 534), this protein is Lysine exporter LysE.